Here is a 223-residue protein sequence, read N- to C-terminus: Probable Brix domain-containing ribosomal biogenesis protein (223 aa).

The Brix domain occupies 1–196 (MMLITTSHRP…IWIMEDGRRW (196 aa)).

Functionally, probably involved in the biogenesis of the ribosome. The polypeptide is Probable Brix domain-containing ribosomal biogenesis protein (Pyrococcus furiosus (strain ATCC 43587 / DSM 3638 / JCM 8422 / Vc1)).